A 105-amino-acid polypeptide reads, in one-letter code: N(4)-acetylcytidine amidohydrolase (105 aa).

The region spanning Thr7–Glu93 is the ASCH domain. Residue Lys21 is the Proton acceptor of the active site. Thr24 acts as the Nucleophile in catalysis. The Proton donor role is filled by Glu74.

The protein belongs to the N(4)-acetylcytidine amidohydrolase family.

The enzyme catalyses N(4)-acetylcytidine + H2O = cytidine + acetate + H(+). It carries out the reaction N(4)-acetyl-2'-deoxycytidine + H2O = 2'-deoxycytidine + acetate + H(+). It catalyses the reaction N(4)-acetylcytosine + H2O = cytosine + acetate + H(+). Catalyzes the hydrolysis of N(4)-acetylcytidine (ac4C). In Shewanella baltica (strain OS223), this protein is N(4)-acetylcytidine amidohydrolase.